We begin with the raw amino-acid sequence, 66 residues long: MKIFFFIFAALILLAQIFQARTAIHRALICKRMEGHCEAECLTFEVKIGGCRAELAPFCCKNRKKH.

Positions 1-22 (MKIFFFIFAALILLAQIFQART) are cleaved as a signal peptide. 2 disulfides stabilise this stretch: C37-C51 and C41-C60.

It belongs to the beta-defensin family.

Its subcellular location is the secreted. Has antibacterial activity. In Hylobates lar (Lar gibbon), this protein is Beta-defensin 107A (DEFB107A).